We begin with the raw amino-acid sequence, 195 residues long: HTH-type transcriptional regulator BetI (195 aa).

Residues 8–68 (SIRRRQLIDA…ATMRDITSQL (61 aa)) enclose the HTH tetR-type domain. The H-T-H motif DNA-binding region spans 31-50 (TIAQIARRAGVSTGIISHYF).

It participates in amine and polyamine biosynthesis; betaine biosynthesis via choline pathway [regulation]. Functionally, repressor involved in the biosynthesis of the osmoprotectant glycine betaine. It represses transcription of the choline transporter BetT and the genes of BetAB involved in the synthesis of glycine betaine. The chain is HTH-type transcriptional regulator BetI from Escherichia coli O17:K52:H18 (strain UMN026 / ExPEC).